Consider the following 60-residue polypeptide: Bowman-Birk type proteinase inhibitor C1 (60 aa).

Cystine bridges form between cysteine 5–cysteine 21, cysteine 11–cysteine 19, cysteine 28–cysteine 35, and cysteine 32–cysteine 49.

This sequence belongs to the Bowman-Birk serine protease inhibitor family. Expressed in bulb (at protein level).

Its function is as follows. Serine protease inhibitor. Strongly inhibits trypsin (Ki = 0.22 nM) and very weakly inhibits chymotrypsin (Ki = 1200 nM). Does not inhibit bacterial subtilisin. The polypeptide is Bowman-Birk type proteinase inhibitor C1 (Hyacinthus orientalis (Common hyacinth)).